The primary structure comprises 194 residues: CASP-like protein 2C2 (194 aa).

Residues 1 to 27 lie on the Cytoplasmic side of the membrane; it reads MAAGQPRPPPPPSSVRTERVLRAACAA. Residues 28-48 form a helical membrane-spanning segment; sequence MAAAGALLLGFSAETKTVIFV. The Extracellular portion of the chain corresponds to 49–58; that stretch reads QKKAVPKDVQ. The helical transmembrane segment at 59–79 threads the bilayer; it reads ALWVLIVAAAAAAAYHAAQLA. Residues 80–113 are Cytoplasmic-facing; the sequence is RCLCMDRLAGGGGGCRRLRRAVACATFLLDKGCA. The chain crosses the membrane as a helical span at residues 114–134; the sequence is YMVLATTVAALQACFVGLLGV. Residues 135-152 lie on the Extracellular side of the membrane; it reads EALQWSKLCNIYTRFCEQ. A helical transmembrane segment spans residues 153-173; the sequence is AAAGMVCSLVAAAGMAVLSAF. Residues 174 to 194 lie on the Cytoplasmic side of the membrane; sequence SARDLFRRRRPCSPCVQVQQV.

This sequence belongs to the Casparian strip membrane proteins (CASP) family. As to quaternary structure, homodimer and heterodimers.

The protein localises to the cell membrane. The polypeptide is CASP-like protein 2C2 (Sorghum bicolor (Sorghum)).